The primary structure comprises 247 residues: Pyridoxine 5'-phosphate synthase (247 aa).

N7 serves as a coordination point for 3-amino-2-oxopropyl phosphate. Residue 9-10 (DH) coordinates 1-deoxy-D-xylulose 5-phosphate. R18 serves as a coordination point for 3-amino-2-oxopropyl phosphate. H43 (proton acceptor) is an active-site residue. 1-deoxy-D-xylulose 5-phosphate-binding residues include R45 and H50. E70 serves as the catalytic Proton acceptor. Position 100 (T100) interacts with 1-deoxy-D-xylulose 5-phosphate. Residue H190 is the Proton donor of the active site. 3-amino-2-oxopropyl phosphate contacts are provided by residues G191 and 212–213 (GH).

Belongs to the PNP synthase family. In terms of assembly, homooctamer; tetramer of dimers.

It is found in the cytoplasm. It catalyses the reaction 3-amino-2-oxopropyl phosphate + 1-deoxy-D-xylulose 5-phosphate = pyridoxine 5'-phosphate + phosphate + 2 H2O + H(+). The protein operates within cofactor biosynthesis; pyridoxine 5'-phosphate biosynthesis; pyridoxine 5'-phosphate from D-erythrose 4-phosphate: step 5/5. Functionally, catalyzes the complicated ring closure reaction between the two acyclic compounds 1-deoxy-D-xylulose-5-phosphate (DXP) and 3-amino-2-oxopropyl phosphate (1-amino-acetone-3-phosphate or AAP) to form pyridoxine 5'-phosphate (PNP) and inorganic phosphate. This chain is Pyridoxine 5'-phosphate synthase, found in Synechococcus sp. (strain WH7803).